The sequence spans 115 residues: NADH-ubiquinone oxidoreductase chain 3 (115 aa).

A run of 3 helical transmembrane segments spans residues 3–23 (LVIA…VAFW), 55–75 (FFLV…LLPI), and 87–107 (LLSL…YEWL).

Belongs to the complex I subunit 3 family. As to quaternary structure, core subunit of respiratory chain NADH dehydrogenase (Complex I) which is composed of 45 different subunits. Interacts with TMEM186. Interacts with TMEM242.

It is found in the mitochondrion inner membrane. The enzyme catalyses a ubiquinone + NADH + 5 H(+)(in) = a ubiquinol + NAD(+) + 4 H(+)(out). In terms of biological role, core subunit of the mitochondrial membrane respiratory chain NADH dehydrogenase (Complex I) which catalyzes electron transfer from NADH through the respiratory chain, using ubiquinone as an electron acceptor. Essential for the catalytic activity of complex I. This is NADH-ubiquinone oxidoreductase chain 3 from Ornithorhynchus anatinus (Duckbill platypus).